The chain runs to 483 residues: Transmembrane protein 39B (483 aa).

Residue N9 is glycosylated (N-linked (GlcNAc...) asparagine). A run of 7 helical transmembrane segments spans residues 76-96 (HLLFELQLFFCHLIALFVHYI), 114-134 (TSLNFHLIDFNVLTLTTIVLA), 158-182 (LLVATRFAVLTGTGWSLCRSIILLF), 187-207 (FFNLLFLCYPFGMYIPFLQLG), 281-301 (EVLLSSMLSAYYVAFVPVWFV), 414-434 (VLNILTTLEGVLIFYQLYSLL), and 440-460 (HHTISLALILFSNYYAFFKLL).

The protein belongs to the TMEM39 family.

The protein resides in the endoplasmic reticulum membrane. May protect the cells against DNA damage caused by exposure to the cold-warming stress and facilitates tissue damage repair during the recovery phase. The polypeptide is Transmembrane protein 39B (Xenopus tropicalis (Western clawed frog)).